The sequence spans 260 residues: Hydroxyacylglutathione hydrolase (260 aa).

Residues histidine 66, histidine 68, aspartate 70, histidine 71, histidine 125, aspartate 150, and histidine 188 each coordinate Zn(2+).

Belongs to the metallo-beta-lactamase superfamily. Glyoxalase II family. In terms of assembly, monomer. It depends on Zn(2+) as a cofactor.

It carries out the reaction an S-(2-hydroxyacyl)glutathione + H2O = a 2-hydroxy carboxylate + glutathione + H(+). The protein operates within secondary metabolite metabolism; methylglyoxal degradation; (R)-lactate from methylglyoxal: step 2/2. Its function is as follows. Thiolesterase that catalyzes the hydrolysis of S-D-lactoyl-glutathione to form glutathione and D-lactic acid. In Prochlorococcus marinus (strain MIT 9303), this protein is Hydroxyacylglutathione hydrolase.